The sequence spans 85 residues: Large ribosomal subunit protein bL31 (85 aa).

The disordered stretch occupies residues 64 to 85 (KYGMSESQGAGGKGNAKKKDEK).

Belongs to the bacterial ribosomal protein bL31 family. Type A subfamily. As to quaternary structure, part of the 50S ribosomal subunit.

Its function is as follows. Binds the 23S rRNA. This is Large ribosomal subunit protein bL31 from Acaryochloris marina (strain MBIC 11017).